The following is a 414-amino-acid chain: uncharacterized protein (414 aa).

The first 18 residues, 1–18, serve as a signal peptide directing secretion; it reads MLKRLMLASAILPVVSFA.

This is an uncharacterized protein from Aquifex aeolicus (strain VF5).